We begin with the raw amino-acid sequence, 533 residues long: Peptide chain release factor 3 (533 aa).

The region spanning R11–L284 is the tr-type G domain. GTP-binding positions include S20–T27, D92–H96, and N146–D149.

This sequence belongs to the TRAFAC class translation factor GTPase superfamily. Classic translation factor GTPase family. PrfC subfamily.

It localises to the cytoplasm. In terms of biological role, increases the formation of ribosomal termination complexes and stimulates activities of RF-1 and RF-2. It binds guanine nucleotides and has strong preference for UGA stop codons. It may interact directly with the ribosome. The stimulation of RF-1 and RF-2 is significantly reduced by GTP and GDP, but not by GMP. The chain is Peptide chain release factor 3 from Ralstonia nicotianae (strain ATCC BAA-1114 / GMI1000) (Ralstonia solanacearum).